Reading from the N-terminus, the 505-residue chain is Oxidative stress-induced growth inhibitor 2 (505 aa).

It belongs to the OKL38 family. Requires NADPH as cofactor. As to expression, ubiquitous. Expressed at higher levels in testis and ovary.

It is found in the midbody. Its function is as follows. Monooxygenase catalytic activity. May be involved in meiosis or the maturation of germ cells. This Homo sapiens (Human) protein is Oxidative stress-induced growth inhibitor 2.